Reading from the N-terminus, the 553-residue chain is Efflux pump alnA (553 aa).

The span at 1-21 shows a compositional bias: basic and acidic residues; it reads MSSDDTVKQEHSCSADSEKQD. Positions 1-36 are disordered; sequence MSSDDTVKQEHSCSADSEKQDSSCASDNEQPKEPQS. 13 helical membrane-spanning segments follow: residues 40–60, 85–105, 110–130, 136–156, 174–194, 202–222, 243–263, 270–290, 319–339, 355–375, 382–402, 413–433, and 522–542; these read IHGL…FLFA, WSGV…LQIF, IKWM…ICGA, MLIG…VGVM, AMGL…GAFT, WSFY…IFLL, LVGT…INFA, SEPG…VFGI, LLFV…YVIP, VRLL…GYLA, IPWY…MYTI, GYSS…HAVA, and TYIL…GMKW.

Belongs to the major facilitator superfamily. TCR/Tet family.

The protein localises to the cell membrane. Functionally, efflux pump; part of the gene cluster that mediates the biosynthesis of asperlin, a polyketide showing anti-inflammatory, antitumor and antibiotic activities. Is probably involved in the efflux of asperlin. This is Efflux pump alnA from Emericella nidulans (strain FGSC A4 / ATCC 38163 / CBS 112.46 / NRRL 194 / M139) (Aspergillus nidulans).